An 85-amino-acid polypeptide reads, in one-letter code: Putative RING finger protein 095L (85 aa).

The RING-type; degenerate zinc-finger motif lies at Cys-39–Arg-73.

The chain is Putative RING finger protein 095L from Invertebrate iridescent virus 6 (IIV-6).